Here is a 593-residue protein sequence, read N- to C-terminus: Probable E3 ubiquitin-protein ligase ARI2 (593 aa).

The segment at 120–334 (SMMSCDICVE…ISGHSCGRFQ (215 aa)) is TRIAD supradomain. Positions 124, 127, 141, 143, 146, 149, 168, 173, 215, 221, 237, 239, 244, 247, 252, 257, 284, and 287 each coordinate Zn(2+). Residues 124 to 173 (CDICVEDVPGYQLTRMDCGHSFCNNCWTGHFTVKINEGQSKRIICMAHKC) form an RING-type 1 zinc finger. The IBR-type zinc finger occupies 195–257 (EKFDRFLLES…SSQAHSPCSC (63 aa)). The segment at 284–312 (CPKCHKPVEKNGGCNLVTCLCRQSFCWLC) adopts an RING-type 2; atypical zinc-finger fold. Cys297 is a catalytic residue. Residues Cys302, Cys304, Cys309, Cys312, His320, and Cys330 each contribute to the Zn(2+) site.

The protein belongs to the RBR family. Ariadne subfamily. Zn(2+) is required as a cofactor. Ubiquitous.

The enzyme catalyses [E2 ubiquitin-conjugating enzyme]-S-ubiquitinyl-L-cysteine + [acceptor protein]-L-lysine = [E2 ubiquitin-conjugating enzyme]-L-cysteine + [acceptor protein]-N(6)-ubiquitinyl-L-lysine.. It participates in protein modification; protein ubiquitination. Its function is as follows. Might act as an E3 ubiquitin-protein ligase, or as part of E3 complex, which accepts ubiquitin from specific E2 ubiquitin-conjugating enzymes and then transfers it to substrates. The protein is Probable E3 ubiquitin-protein ligase ARI2 (ARI2) of Arabidopsis thaliana (Mouse-ear cress).